An 887-amino-acid polypeptide reads, in one-letter code: Lon protease homolog 2, peroxisomal (887 aa).

The 246-residue stretch at 11 to 256 (LGILAFRNKV…KATELVDRHL (246 aa)) folds into the Lon N-terminal domain. Residues 72–101 (YPGGGTDSGERNVKSQPGLSDSRKADGKSQ) form a disordered region. ATP is bound at residue 409–416 (GPPGVGKT). Residues 693 to 878 (VSNPGVSVGL…EVLEQAFEGG (186 aa)) enclose the Lon proteolytic domain. Catalysis depends on residues S784 and K827. The Microbody targeting signal signature appears at 885–887 (ARL).

The protein belongs to the peptidase S16 family.

It localises to the peroxisome matrix. The catalysed reaction is Hydrolysis of proteins in presence of ATP.. Functionally, ATP-dependent serine protease that mediates the selective degradation of misfolded and unassembled polypeptides in the peroxisomal matrix. Necessary for type 2 peroxisome targeting signal (PTS2)-containing protein processing and facilitates peroxisome matrix protein import. This is Lon protease homolog 2, peroxisomal from Spinacia oleracea (Spinach).